The chain runs to 216 residues: Peptide methionine sulfoxide reductase MsrA (216 aa).

Cys-54 is a catalytic residue.

This sequence belongs to the MsrA Met sulfoxide reductase family.

The catalysed reaction is L-methionyl-[protein] + [thioredoxin]-disulfide + H2O = L-methionyl-(S)-S-oxide-[protein] + [thioredoxin]-dithiol. It catalyses the reaction [thioredoxin]-disulfide + L-methionine + H2O = L-methionine (S)-S-oxide + [thioredoxin]-dithiol. Has an important function as a repair enzyme for proteins that have been inactivated by oxidation. Catalyzes the reversible oxidation-reduction of methionine sulfoxide in proteins to methionine. This is Peptide methionine sulfoxide reductase MsrA from Xanthomonas campestris pv. phaseoli.